We begin with the raw amino-acid sequence, 519 residues long: uncharacterized protein (519 aa).

Belongs to the glycogen phosphorylase family.

This is an uncharacterized protein from Methanocaldococcus jannaschii (strain ATCC 43067 / DSM 2661 / JAL-1 / JCM 10045 / NBRC 100440) (Methanococcus jannaschii).